Here is a 160-residue protein sequence, read N- to C-terminus: Cytochrome b6-f complex subunit 4 (160 aa).

The next 3 helical transmembrane spans lie at 36-56, 95-115, and 131-151; these read LLYIFPVVIFGTIACNVGLAV, LLGVLLMAAVPAGLLTVPFLE, and TVFLFGTVVALWLGIGAALPI.

Belongs to the cytochrome b family. PetD subfamily. The 4 large subunits of the cytochrome b6-f complex are cytochrome b6, subunit IV (17 kDa polypeptide, petD), cytochrome f and the Rieske protein, while the 4 small subunits are petG, petL, petM and petN. The complex functions as a dimer.

It localises to the plastid. Its subcellular location is the chloroplast thylakoid membrane. Its function is as follows. Component of the cytochrome b6-f complex, which mediates electron transfer between photosystem II (PSII) and photosystem I (PSI), cyclic electron flow around PSI, and state transitions. This chain is Cytochrome b6-f complex subunit 4, found in Spirogyra maxima (Green alga).